Consider the following 248-residue polypeptide: Ribonuclease PH (248 aa).

Phosphate contacts are provided by residues Arg86 and 124 to 126 (GTR).

It belongs to the RNase PH family. As to quaternary structure, homohexameric ring arranged as a trimer of dimers.

The catalysed reaction is tRNA(n+1) + phosphate = tRNA(n) + a ribonucleoside 5'-diphosphate. Functionally, phosphorolytic 3'-5' exoribonuclease that plays an important role in tRNA 3'-end maturation. Removes nucleotide residues following the 3'-CCA terminus of tRNAs; can also add nucleotides to the ends of RNA molecules by using nucleoside diphosphates as substrates, but this may not be physiologically important. Probably plays a role in initiation of 16S rRNA degradation (leading to ribosome degradation) during starvation. This Clostridium kluyveri (strain NBRC 12016) protein is Ribonuclease PH.